The chain runs to 338 residues: Glyceraldehyde-3-phosphate dehydrogenase (338 aa).

NAD(+) is bound by residues Arg-13–Ile-14, Asp-35, and Arg-80. Residues Ser-151–Thr-153, Thr-182, Thr-211–Gly-212, and Arg-234 contribute to the D-glyceraldehyde 3-phosphate site. Cys-152 acts as the Nucleophile in catalysis. Asn-316 contacts NAD(+).

The protein belongs to the glyceraldehyde-3-phosphate dehydrogenase family. In terms of assembly, homotetramer.

It localises to the cytoplasm. The enzyme catalyses D-glyceraldehyde 3-phosphate + phosphate + NAD(+) = (2R)-3-phospho-glyceroyl phosphate + NADH + H(+). It functions in the pathway carbohydrate degradation; glycolysis; pyruvate from D-glyceraldehyde 3-phosphate: step 1/5. The chain is Glyceraldehyde-3-phosphate dehydrogenase (GPDA) from Colletotrichum gloeosporioides (Anthracnose fungus).